A 402-amino-acid polypeptide reads, in one-letter code: Putative F-box protein At3g20030 (402 aa).

Residues M1 to I56 enclose the F-box domain.

This chain is Putative F-box protein At3g20030, found in Arabidopsis thaliana (Mouse-ear cress).